A 336-amino-acid polypeptide reads, in one-letter code: Biotin synthase (336 aa).

Residues glutamine 54–arginine 281 form the Radical SAM core domain. Residues cysteine 69, cysteine 73, and cysteine 76 each contribute to the [4Fe-4S] cluster site. Residues cysteine 113, cysteine 144, cysteine 204, and arginine 276 each contribute to the [2Fe-2S] cluster site.

Belongs to the radical SAM superfamily. Biotin synthase family. As to quaternary structure, homodimer. The cofactor is [4Fe-4S] cluster. It depends on [2Fe-2S] cluster as a cofactor.

It catalyses the reaction (4R,5S)-dethiobiotin + (sulfur carrier)-SH + 2 reduced [2Fe-2S]-[ferredoxin] + 2 S-adenosyl-L-methionine = (sulfur carrier)-H + biotin + 2 5'-deoxyadenosine + 2 L-methionine + 2 oxidized [2Fe-2S]-[ferredoxin]. Its pathway is cofactor biosynthesis; biotin biosynthesis; biotin from 7,8-diaminononanoate: step 2/2. Catalyzes the conversion of dethiobiotin (DTB) to biotin by the insertion of a sulfur atom into dethiobiotin via a radical-based mechanism. The chain is Biotin synthase from Actinobacillus pleuropneumoniae serotype 7 (strain AP76).